The sequence spans 338 residues: 1-aminocyclopropane-1-carboxylate deaminase (338 aa).

The residue at position 51 (lysine 51) is an N6-(pyridoxal phosphate)lysine. Residue serine 78 is the Nucleophile of the active site.

Belongs to the ACC deaminase/D-cysteine desulfhydrase family. Homotrimer. Pyridoxal 5'-phosphate is required as a cofactor.

The enzyme catalyses 1-aminocyclopropane-1-carboxylate + H2O = 2-oxobutanoate + NH4(+). Functionally, catalyzes a cyclopropane ring-opening reaction, the irreversible conversion of 1-aminocyclopropane-1-carboxylate (ACC) to ammonia and alpha-ketobutyrate. Allows growth on ACC as a nitrogen source. The protein is 1-aminocyclopropane-1-carboxylate deaminase of Pseudomonas syringae pv. syringae (strain B728a).